The following is a 185-amino-acid chain: Elongation factor P 1 (185 aa).

This sequence belongs to the elongation factor P family.

It is found in the cytoplasm. The protein operates within protein biosynthesis; polypeptide chain elongation. In terms of biological role, involved in peptide bond synthesis. Stimulates efficient translation and peptide-bond synthesis on native or reconstituted 70S ribosomes in vitro. Probably functions indirectly by altering the affinity of the ribosome for aminoacyl-tRNA, thus increasing their reactivity as acceptors for peptidyl transferase. The chain is Elongation factor P 1 (efp1) from Chlamydia pneumoniae (Chlamydophila pneumoniae).